A 376-amino-acid polypeptide reads, in one-letter code: Phosphoserine aminotransferase (376 aa).

Arginine 46 is a binding site for L-glutamate. Pyridoxal 5'-phosphate is bound by residues 80–81 (AT), phenylalanine 104, threonine 150, aspartate 172, and glutamine 195. Residue lysine 196 is modified to N6-(pyridoxal phosphate)lysine. Position 247–248 (247–248 (NT)) interacts with pyridoxal 5'-phosphate.

It belongs to the class-V pyridoxal-phosphate-dependent aminotransferase family. SerC subfamily. In terms of assembly, homodimer. Pyridoxal 5'-phosphate serves as cofactor.

It is found in the cytoplasm. It carries out the reaction O-phospho-L-serine + 2-oxoglutarate = 3-phosphooxypyruvate + L-glutamate. It catalyses the reaction 4-(phosphooxy)-L-threonine + 2-oxoglutarate = (R)-3-hydroxy-2-oxo-4-phosphooxybutanoate + L-glutamate. It functions in the pathway amino-acid biosynthesis; L-serine biosynthesis; L-serine from 3-phospho-D-glycerate: step 2/3. The protein operates within cofactor biosynthesis; pyridoxine 5'-phosphate biosynthesis; pyridoxine 5'-phosphate from D-erythrose 4-phosphate: step 3/5. Catalyzes the reversible conversion of 3-phosphohydroxypyruvate to phosphoserine and of 3-hydroxy-2-oxo-4-phosphonooxybutanoate to phosphohydroxythreonine. The chain is Phosphoserine aminotransferase from Corynebacterium glutamicum (strain R).